A 188-amino-acid chain; its full sequence is MALEKIIEKLENEKKVKIEELRKKREKEYEDFVAKKEKELEEWKEQQRKNLKESLNREESTLLSQLRLKYNTEKARIEAETVNRVKLLLLEKIKSLSNELYNGIWDGFVEKESVKGGEIILAKGEDKIDVDHFCKKYGLVLGKDRVEGKGGFVIQKDNLVIDLTIDTIVEELVNKNILEIAQILRGEK.

It belongs to the V-ATPase E subunit family.

Produces ATP from ADP in the presence of a proton gradient across the membrane. This is V-type proton ATPase subunit E from Dictyoglomus turgidum (strain DSM 6724 / Z-1310).